We begin with the raw amino-acid sequence, 227 residues long: 4-nitrobenzoate reductase (227 aa).

FMN is bound at residue 15-19 (RRAVR). Residues S45, Y102, and I107 each contribute to the NAD(+) site. R213 provides a ligand contact to FMN.

This sequence belongs to the nitroreductase family. It depends on FMN as a cofactor.

The enzyme catalyses 4-nitrobenzoate + 2 NADH + 2 H(+) = 4-hydroxylaminobenzoate + 2 NAD(+) + H2O. Functionally, nitroreductase involved in the degradation of nitroaromatic compounds. Catalyzes the conversion of 4-nitrobenzoate to 4-hydroxylaminobenzoate. Required for the catabolism of 4-nitrotoluene. The polypeptide is 4-nitrobenzoate reductase (Pseudomonas putida (Arthrobacter siderocapsulatus)).